A 314-amino-acid polypeptide reads, in one-letter code: Ribonuclease Z (314 aa).

Histidine 60, histidine 62, aspartate 64, histidine 65, histidine 140, aspartate 209, and histidine 269 together coordinate Zn(2+). The active-site Proton acceptor is the aspartate 64.

It belongs to the RNase Z family. Homodimer. Zn(2+) is required as a cofactor.

It carries out the reaction Endonucleolytic cleavage of RNA, removing extra 3' nucleotides from tRNA precursor, generating 3' termini of tRNAs. A 3'-hydroxy group is left at the tRNA terminus and a 5'-phosphoryl group is left at the trailer molecule.. In terms of biological role, zinc phosphodiesterase, which displays some tRNA 3'-processing endonuclease activity. Probably involved in tRNA maturation, by removing a 3'-trailer from precursor tRNA. The protein is Ribonuclease Z of Methanococcus maripaludis (strain C5 / ATCC BAA-1333).